The primary structure comprises 324 residues: MRLREFTALSSLLFSLLLLSASAEQCGSQAGGARCASGLCCSKFGWCGNTNDYCGPGNCQSQCPGGPTPPGGGDLGSIISSSMFDQMLKHRNDNACQGKGFYSYNAFINAARSFPGFGTSGDTTARKREIAAFFAQTSHETTGGWATAPDGPYAWGYCWLREQGSPGDYCTPSGQWPCAPGRKYFGRGPIQISHNYNYGPCGRAIGVDLLNNPDLVATDPVISFKSALWFWMTPQSPKPSCHDVIIGRWQPSSADRAANRLPGFGVITNIINGGLECGRGTDSRVQDRIGFYRRYCSILGVSPGDNLDCGNQRSFGNGLLVDTM.

The signal sequence occupies residues 1–23 (MRLREFTALSSLLFSLLLLSASA). A Chitin-binding type-1 domain is found at 24–65 (EQCGSQAGGARCASGLCCSKFGWCGNTNDYCGPGNCQSQCPG). Disulfide bonds link cysteine 26/cysteine 41, cysteine 35/cysteine 47, cysteine 40/cysteine 54, and cysteine 59/cysteine 63. 4-hydroxyproline occurs at positions 67 and 69. 3 disulfides stabilise this stretch: cysteine 96/cysteine 158, cysteine 170/cysteine 178, and cysteine 277/cysteine 309. Glutamate 140 acts as the Proton donor in catalysis. A propeptide spans 318–324 (GLLVDTM) (removed in mature form).

This sequence belongs to the glycosyl hydrolase 19 family. Chitinase class I subfamily. The 4-hydroxyproline residues are not glycosylated in this plant vacuolar protein.

The protein resides in the vacuole. The enzyme catalyses Random endo-hydrolysis of N-acetyl-beta-D-glucosaminide (1-&gt;4)-beta-linkages in chitin and chitodextrins.. Its function is as follows. Defense against chitin-containing fungal pathogens. This is Endochitinase B (CHN50) from Nicotiana tabacum (Common tobacco).